The primary structure comprises 139 residues: MSGKGKAGKSGGKAGSETKSMSRSSKAGLQFPVGRVHRLLKKGNYAQRVGAGAPVYMAAVLEYLAAEILELAGNAARDNKKQRIVPRHLQLAIRNDEELHKLLGNVVISQGGVVPHIAPELLPSKSSKGKKDEGVSQEL.

Residues Met-1–Ala-27 are disordered. Ser-2 carries the N-acetylserine modification. N6-acetyllysine occurs at positions 9 and 13. Over residues Glu-17–Ala-27 the composition is skewed to polar residues. An N5-methylglutamine modification is found at Gln-110. Residues Pro-119–Leu-139 form a disordered region. Over residues Gly-129 to Leu-139 the composition is skewed to basic and acidic residues. Ser-136 carries the post-translational modification Phosphoserine. The short motif at Ser-136–Gln-137 is the [ST]-Q motif element.

The protein belongs to the histone H2A family. In terms of assembly, the nucleosome is a histone octamer containing two molecules each of H2A, H2B, H3 and H4 assembled in one H3-H4 heterotetramer and two H2A-H2B heterodimers. The octamer wraps approximately 147 bp of DNA. Post-translationally, phosphorylated to form H2AS128ph (gamma-H2A) in response to DNA double-strand breaks (DSBs) generated by exogenous genotoxic agents and by stalled replication forks. Phosphorylation is dependent on the DNA damage checkpoint kinases MEC1/ATR and TEL1/ATM, spreads on either side of a detected DSB site and may mark the surrounding chromatin for recruitment of proteins required for DNA damage signaling and repair. Gamma-H2A is removed from the DNA prior to the strand invasion-primer extension step of the repair process and subsequently dephosphorylated. Dephosphorylation is necessary for efficient recovery from the DNA damage checkpoint. Acetylated by ESA1 to form H2AK4ac and H2AK7ac.

It localises to the nucleus. The protein localises to the chromosome. Functionally, core component of nucleosome which plays a central role in DNA double strand break (DSB) repair. Nucleosomes wrap and compact DNA into chromatin, limiting DNA accessibility to the cellular machineries which require DNA as a template. Histones thereby play a central role in transcription regulation, DNA repair, DNA replication and chromosomal stability. DNA accessibility is regulated via a complex set of post-translational modifications of histones, also called histone code, and nucleosome remodeling. The protein is Histone H2A of Agaricus bisporus (White button mushroom).